The chain runs to 197 residues: Caspase recruitment domain-containing protein 16 (197 aa).

In terms of domain architecture, CARD spans 1-91 (MADKVLKEKR…YLAETLGLSA (91 aa)).

As to quaternary structure, homooligomer. Interacts with CASP1, CASP4, CARD8 and RIPK2. In terms of tissue distribution, widely expressed. Expressed at higher level in placenta, spleen, lymph node and bone marrow. Weakly or not expressed in thymus.

Functionally, caspase inhibitor. Acts as a regulator of procaspase-1/CASP1 activation implicated in the regulation of the proteolytic maturation of pro-interleukin-1 beta (IL1B) and its release during inflammation. Inhibits the release of IL1B in response to LPS in monocytes. Also induces NF-kappa-B activation during the pro-inflammatory cytokine response. Also able to inhibit CASP1-mediated neuronal cell death, TNF-alpha, hypoxia-, UV-, and staurosporine-mediated cell death but not ER stress-mediated cell death. Acts by preventing activation of caspases CASP1 and CASP4, possibly by preventing the interaction between CASP1 and RIPK2. The sequence is that of Caspase recruitment domain-containing protein 16 (CARD16) from Homo sapiens (Human).